Here is a 281-residue protein sequence, read N- to C-terminus: Arabinooligosaccharides transport system permease protein AraQ (281 aa).

Transmembrane regions (helical) follow at residues 15–35 (LTLF…CLLL), 81–101 (LVLG…IGYG), 112–132 (IIFV…MLPL), 142–162 (IDSY…VFFF), 185–205 (FGIF…AMII), and 247–267 (MLIS…LFFQ). The 190-residue stretch at 77–266 (FFNSLVLGLF…LPVIIIFLFF (190 aa)) folds into the ABC transmembrane type-1 domain.

It belongs to the binding-protein-dependent transport system permease family. MalFG subfamily. In terms of assembly, the complex is composed of two ATP-binding proteins (MsmX), two transmembrane proteins (AraP and AraQ) and a solute-binding protein (AraN).

It localises to the cell membrane. In terms of biological role, part of the ABC transporter complex AraNPQ involved in the uptake of arabinooligosaccharides. Transports alpha-1,5-arabinooligosaccharides, at least up to four L-arabinosyl units. Responsible for the translocation of the substrate across the membrane. This is Arabinooligosaccharides transport system permease protein AraQ from Bacillus subtilis (strain 168).